A 107-amino-acid polypeptide reads, in one-letter code: MNQYSEFHQLADQLMLYIEETLDGFSGDSDIDYETNGGVMTLTFENGSKIVINRQEPLHQVWPATKAGGYHFNYREGKWFCSRSGEEFFAKLSQAATTQAGEEVSFG.

The protein belongs to the frataxin family.

Functionally, involved in iron-sulfur (Fe-S) cluster assembly. May act as a regulator of Fe-S biogenesis. This is Iron-sulfur cluster assembly protein CyaY from Yersinia intermedia.